The primary structure comprises 643 residues: 1-deoxy-D-xylulose-5-phosphate synthase (643 aa).

Residues His72 and 113-115 (GHA) contribute to the thiamine diphosphate site. Asp144 contacts Mg(2+). Thiamine diphosphate is bound by residues 145–146 (GA), Asn174, Tyr287, and Glu370. Asn174 serves as a coordination point for Mg(2+).

It belongs to the transketolase family. DXPS subfamily. As to quaternary structure, homodimer. Requires Mg(2+) as cofactor. It depends on thiamine diphosphate as a cofactor.

It carries out the reaction D-glyceraldehyde 3-phosphate + pyruvate + H(+) = 1-deoxy-D-xylulose 5-phosphate + CO2. The protein operates within metabolic intermediate biosynthesis; 1-deoxy-D-xylulose 5-phosphate biosynthesis; 1-deoxy-D-xylulose 5-phosphate from D-glyceraldehyde 3-phosphate and pyruvate: step 1/1. In terms of biological role, catalyzes the acyloin condensation reaction between C atoms 2 and 3 of pyruvate and glyceraldehyde 3-phosphate to yield 1-deoxy-D-xylulose-5-phosphate (DXP). This Parasynechococcus marenigrum (strain WH8102) protein is 1-deoxy-D-xylulose-5-phosphate synthase.